A 320-amino-acid chain; its full sequence is tRNA pseudouridine synthase B (320 aa).

Aspartate 48 functions as the Nucleophile in the catalytic mechanism.

Belongs to the pseudouridine synthase TruB family. Type 1 subfamily.

The catalysed reaction is uridine(55) in tRNA = pseudouridine(55) in tRNA. Responsible for synthesis of pseudouridine from uracil-55 in the psi GC loop of transfer RNAs. The chain is tRNA pseudouridine synthase B from Mycobacterium leprae (strain TN).